The following is a 776-amino-acid chain: Protein translocase subunit SecA 2 (776 aa).

Residues Gln80, 98–102 (GEGKT), and Asp486 each bind ATP.

It belongs to the SecA family. As to quaternary structure, monomer and homodimer. Part of the essential Sec protein translocation apparatus which comprises SecA, SecYEG and auxiliary proteins SecDF. Other proteins may also be involved.

It is found in the cell membrane. The protein resides in the cytoplasm. It catalyses the reaction ATP + H2O + cellular proteinSide 1 = ADP + phosphate + cellular proteinSide 2.. Its function is as follows. Part of the Sec protein translocase complex. Interacts with the SecYEG preprotein conducting channel. Has a central role in coupling the hydrolysis of ATP to the transfer of proteins into and across the cell membrane, serving as an ATP-driven molecular motor driving the stepwise translocation of polypeptide chains across the membrane. This chain is Protein translocase subunit SecA 2, found in Listeria innocua serovar 6a (strain ATCC BAA-680 / CLIP 11262).